The primary structure comprises 513 residues: ABC transporter H family member 2 (513 aa).

The ABC transporter domain occupies 39 to 280 (LTMKNIHKTY…EHYQKLYKEC (242 aa)). ATP is bound at residue 75–82 (GTSGGGKT). The disordered stretch occupies residues 291–471 (VTSVFKNDDD…SSSYSNNNNN (181 aa)). Residues 324–360 (SYNNNNSNLNNNSNSNSNNNSNNNNSKNYASSSSSSS) show a composition bias toward low complexity. The segment covering 361-386 (VLNGKLSQSTVNNSSIYNHNNDSPFF) has biased composition (polar residues). A compositionally biased stretch (low complexity) spans 387–471 (NSNNNNNINN…SSSYSNNNNN (85 aa)).

This sequence belongs to the ABC transporter superfamily.

The chain is ABC transporter H family member 2 (abcH2) from Dictyostelium discoideum (Social amoeba).